Here is a 1450-residue protein sequence, read N- to C-terminus: Sister chromatid cohesion protein PDS5 homolog (1450 aa).

3 disordered regions span residues 1-145 (MATR…KETK), 680-707 (VGGSTTPTSKKSQPPQQQQQQQQQQQQQ), and 1340-1450 (LPPL…EVEN). Acidic residues predominate over residues 45 to 59 (DDGELDSDIDEEDES). Low complexity predominate over residues 77 to 138 (KTQQQPQKSI…TSSSSQQSTQ (62 aa)). Residues 650–716 (KQLFKKYLEE…QLQQPENDIE (67 aa)) adopt a coiled-coil conformation. Residues 682–691 (GSTTPTSKKS) show a composition bias toward polar residues. Low complexity-rich tracts occupy residues 692-707 (QPPQQQQQQQQQQQQQ) and 1350-1363 (NNNNNNNNTNSTNN). A compositionally biased stretch (basic and acidic residues) spans 1369-1378 (DENNNNKNDN). Residues 1387–1401 (NSTTAVPQKSIISKP) show a composition bias toward low complexity. Residues 1402-1427 (PAKKVSKKAAAKQKSPKKKTNKKKKQ) show a composition bias toward basic residues. The span at 1430 to 1450 (SEEEVSSSEEEDESQDEEVEN) shows a compositional bias: acidic residues.

Belongs to the PDS5 family.

It localises to the nucleus. In terms of biological role, may regulate sister chromatid cohesion during mitosis and couple it to DNA replication. This Dictyostelium discoideum (Social amoeba) protein is Sister chromatid cohesion protein PDS5 homolog.